The primary structure comprises 86 residues: uncharacterized protein (86 aa).

The next 2 helical transmembrane spans lie at 21 to 43 and 53 to 75; these read VFWVGLVVYYGFVALCWIGEATA and FWYASFLGTFLIPLFMSIIYFYF.

It is found in the cell membrane. This is an uncharacterized protein from Archaeoglobus fulgidus (strain ATCC 49558 / DSM 4304 / JCM 9628 / NBRC 100126 / VC-16).